The chain runs to 154 residues: Transcriptional repressor NrdR (154 aa).

A zinc finger spans residues 3-34; it reads CPFCGAEDTAVADTRLNDEADVVRRRRKCNAC. One can recognise an ATP-cone domain in the interval 49 to 139; the sequence is PQVVKKNGLR…VYRNFEDVDA (91 aa).

The protein belongs to the NrdR family. It depends on Zn(2+) as a cofactor.

Its function is as follows. Negatively regulates transcription of bacterial ribonucleotide reductase nrd genes and operons by binding to NrdR-boxes. This chain is Transcriptional repressor NrdR, found in Dechloromonas aromatica (strain RCB).